Here is a 185-residue protein sequence, read N- to C-terminus: ATP synthase subunit b (185 aa).

The helical transmembrane segment at 26 to 46 threads the bilayer; sequence LVLIGFAILLFIVIKFVVPMF.

The protein belongs to the ATPase B chain family. F-type ATPases have 2 components, F(1) - the catalytic core - and F(0) - the membrane proton channel. F(1) has five subunits: alpha(3), beta(3), gamma(1), delta(1), epsilon(1). F(0) has three main subunits: a(1), b(2) and c(10-14). The alpha and beta chains form an alternating ring which encloses part of the gamma chain. F(1) is attached to F(0) by a central stalk formed by the gamma and epsilon chains, while a peripheral stalk is formed by the delta and b chains.

The protein localises to the cell membrane. Functionally, f(1)F(0) ATP synthase produces ATP from ADP in the presence of a proton or sodium gradient. F-type ATPases consist of two structural domains, F(1) containing the extramembraneous catalytic core and F(0) containing the membrane proton channel, linked together by a central stalk and a peripheral stalk. During catalysis, ATP synthesis in the catalytic domain of F(1) is coupled via a rotary mechanism of the central stalk subunits to proton translocation. In terms of biological role, component of the F(0) channel, it forms part of the peripheral stalk, linking F(1) to F(0). This Renibacterium salmoninarum (strain ATCC 33209 / DSM 20767 / JCM 11484 / NBRC 15589 / NCIMB 2235) protein is ATP synthase subunit b.